Consider the following 745-residue polypeptide: Junction plakoglobin (745 aa).

M1 carries the post-translational modification N-acetylmethionine. T14 is a glycosylation site (O-linked (GlcNAc) threonine). A phosphoserine mark is found at S99 and S125. 12 ARM repeats span residues 132-171 (NYQDDAELATRALPELTKLLNDEDPVVVTKAAMIVNQLSK), 172-215 (KEAS…LSHH), 216-255 (REGLLAIFKSGGIPALVRMLSSPVESVLFYAITTLHNLLL), 258-297 (EGAKMAVRLADGLQKMVPLLNKNNPKFLAITTDCLQLLAY), 298-341 (GNQE…LSVC), 342-381 (PSNKPAIVEAGGMQALGKHLTSNSPRLVQNCLWTLRNLSD), 383-420 (ATKQEGLESVLKILVNQLSVDDVNVLTCATGTLSNLTC), 423-464 (SKNK…HLTS), 470-510 (EMAQ…NLAL), 512-551 (PANHAPLQEASVIPRLVQLLVKAHQDAQRHVAAGTQQPYT), 574-613 (PMNRMEIFRLNTIPLFVQLLYSSVENIQRVAAGVLCELAQ), and 615-661 (KEAA…PDYR). Residues 132-297 (NYQDDAELAT…TTDCLQLLAY (166 aa)) form an interaction with DSC1 and DSG1 region. The residue at position 182 (S182) is a Phosphoserine. The interaction with DSC1 stretch occupies residues 574–661 (PMNRMEIFRL…ISEDKNPDYR (88 aa)). Residues S665 and S730 each carry the phosphoserine modification.

Belongs to the beta-catenin family. Homodimer. Component of an E-cadherin/catenin adhesion complex composed of at least E-cadherin/CDH1 and gamma-catenin/JUP, and possibly alpha-catenin/CTNNA1; the complex is located to adherens junctions. The stable association of CTNNA1 is controversial as CTNNA1 was shown not to bind to F-actin when assembled in the complex. Interacts with MUC1. Interacts with CAV1. Interacts with PTPRJ. Interacts with DSG1. Interacts with DSC1 and DSC2. Interacts with PKP2. Interacts with PKP3 (via N-terminus); the interaction is required for PKP3 localization to desmosome cell-cell junctions. Interacts with DSG4. In terms of processing, may be phosphorylated by FER.

It is found in the cell junction. It localises to the adherens junction. The protein resides in the desmosome. Its subcellular location is the cytoplasm. The protein localises to the cytoskeleton. It is found in the cell membrane. It localises to the nucleus. Common junctional plaque protein. The membrane-associated plaques are architectural elements in an important strategic position to influence the arrangement and function of both the cytoskeleton and the cells within the tissue. The presence of plakoglobin in both the desmosomes and in the intermediate junctions suggests that it plays a central role in the structure and function of submembranous plaques. Acts as a substrate for VE-PTP and is required by it to stimulate VE-cadherin function in endothelial cells. Can replace beta-catenin in E-cadherin/catenin adhesion complexes which are proposed to couple cadherins to the actin cytoskeleton. The protein is Junction plakoglobin of Sus scrofa (Pig).